Here is a 330-residue protein sequence, read N- to C-terminus: Virulence plasmid integrase pGP8-D (330 aa).

The Core-binding (CB) domain maps to 39-124 (FSLFEVIMHW…SYISLTRFLN (86 aa)). The 176-residue stretch at 152-327 (VKTNAMNRLQ…SREDNASKKM (176 aa)) folds into the Tyr recombinase domain. Residues R189, K214, H279, R282, and H305 contribute to the active site. Y314 (O-(3'-phospho-DNA)-tyrosine intermediate) is an active-site residue.

The protein belongs to the 'phage' integrase family.

The polypeptide is Virulence plasmid integrase pGP8-D (Chlamydia muridarum (strain MoPn / Nigg)).